We begin with the raw amino-acid sequence, 343 residues long: Tetraacyldisaccharide 4'-kinase (343 aa).

ATP is bound at residue 51–58; sequence HGGGAGKT.

Belongs to the LpxK family.

The catalysed reaction is a lipid A disaccharide + ATP = a lipid IVA + ADP + H(+). It participates in glycolipid biosynthesis; lipid IV(A) biosynthesis; lipid IV(A) from (3R)-3-hydroxytetradecanoyl-[acyl-carrier-protein] and UDP-N-acetyl-alpha-D-glucosamine: step 6/6. Functionally, transfers the gamma-phosphate of ATP to the 4'-position of a tetraacyldisaccharide 1-phosphate intermediate (termed DS-1-P) to form tetraacyldisaccharide 1,4'-bis-phosphate (lipid IVA). In Rhodopseudomonas palustris (strain BisB18), this protein is Tetraacyldisaccharide 4'-kinase.